A 487-amino-acid chain; its full sequence is N-succinylglutamate 5-semialdehyde dehydrogenase (487 aa).

Positions 1 to 23 (MTHFIKGQWQAGKGHDVTSSNPA) are disordered. 220–225 (GSSRTG) contacts NAD(+). Catalysis depends on residues E243 and C277.

Belongs to the aldehyde dehydrogenase family. AstD subfamily.

It carries out the reaction N-succinyl-L-glutamate 5-semialdehyde + NAD(+) + H2O = N-succinyl-L-glutamate + NADH + 2 H(+). It participates in amino-acid degradation; L-arginine degradation via AST pathway; L-glutamate and succinate from L-arginine: step 4/5. Functionally, catalyzes the NAD-dependent reduction of succinylglutamate semialdehyde into succinylglutamate. The polypeptide is N-succinylglutamate 5-semialdehyde dehydrogenase (Shewanella sp. (strain ANA-3)).